The chain runs to 267 residues: 4-hydroxy-tetrahydrodipicolinate reductase (267 aa).

NAD(+) contacts are provided by residues 8 to 13 (GAAGRM) and Asp34. An NADP(+)-binding site is contributed by Arg35. Residues 98–100 (GTT) and 122–125 (AANF) each bind NAD(+). Catalysis depends on His155, which acts as the Proton donor/acceptor. His156 is a (S)-2,3,4,5-tetrahydrodipicolinate binding site. The active-site Proton donor is Lys159. 165–166 (GT) is a (S)-2,3,4,5-tetrahydrodipicolinate binding site.

It belongs to the DapB family.

Its subcellular location is the cytoplasm. It carries out the reaction (S)-2,3,4,5-tetrahydrodipicolinate + NAD(+) + H2O = (2S,4S)-4-hydroxy-2,3,4,5-tetrahydrodipicolinate + NADH + H(+). The enzyme catalyses (S)-2,3,4,5-tetrahydrodipicolinate + NADP(+) + H2O = (2S,4S)-4-hydroxy-2,3,4,5-tetrahydrodipicolinate + NADPH + H(+). The protein operates within amino-acid biosynthesis; L-lysine biosynthesis via DAP pathway; (S)-tetrahydrodipicolinate from L-aspartate: step 4/4. Catalyzes the conversion of 4-hydroxy-tetrahydrodipicolinate (HTPA) to tetrahydrodipicolinate. This Pseudomonas putida (strain ATCC 47054 / DSM 6125 / CFBP 8728 / NCIMB 11950 / KT2440) protein is 4-hydroxy-tetrahydrodipicolinate reductase.